The following is a 545-amino-acid chain: Glucose-6-phosphate isomerase (545 aa).

Catalysis depends on E351, which acts as the Proton donor. Residues H382 and K510 contribute to the active site.

Belongs to the GPI family.

It localises to the cytoplasm. It carries out the reaction alpha-D-glucose 6-phosphate = beta-D-fructose 6-phosphate. The protein operates within carbohydrate biosynthesis; gluconeogenesis. It functions in the pathway carbohydrate degradation; glycolysis; D-glyceraldehyde 3-phosphate and glycerone phosphate from D-glucose: step 2/4. Catalyzes the reversible isomerization of glucose-6-phosphate to fructose-6-phosphate. This chain is Glucose-6-phosphate isomerase, found in Shewanella baltica (strain OS195).